The following is a 240-amino-acid chain: Ubiquinone biosynthesis O-methyltransferase (240 aa).

Arginine 44, glycine 64, aspartate 85, and methionine 129 together coordinate S-adenosyl-L-methionine.

The protein belongs to the methyltransferase superfamily. UbiG/COQ3 family.

The catalysed reaction is a 3-demethylubiquinol + S-adenosyl-L-methionine = a ubiquinol + S-adenosyl-L-homocysteine + H(+). The enzyme catalyses a 3-(all-trans-polyprenyl)benzene-1,2-diol + S-adenosyl-L-methionine = a 2-methoxy-6-(all-trans-polyprenyl)phenol + S-adenosyl-L-homocysteine + H(+). It participates in cofactor biosynthesis; ubiquinone biosynthesis. Functionally, O-methyltransferase that catalyzes the 2 O-methylation steps in the ubiquinone biosynthetic pathway. This chain is Ubiquinone biosynthesis O-methyltransferase, found in Escherichia coli (strain K12 / MC4100 / BW2952).